A 336-amino-acid polypeptide reads, in one-letter code: N-acetyl-gamma-glutamyl-phosphate reductase (336 aa).

Residue Cys156 is part of the active site.

This sequence belongs to the NAGSA dehydrogenase family. Type 1 subfamily.

Its subcellular location is the cytoplasm. The catalysed reaction is N-acetyl-L-glutamate 5-semialdehyde + phosphate + NADP(+) = N-acetyl-L-glutamyl 5-phosphate + NADPH + H(+). Its pathway is amino-acid biosynthesis; L-arginine biosynthesis; N(2)-acetyl-L-ornithine from L-glutamate: step 3/4. Its function is as follows. Catalyzes the NADPH-dependent reduction of N-acetyl-5-glutamyl phosphate to yield N-acetyl-L-glutamate 5-semialdehyde. The sequence is that of N-acetyl-gamma-glutamyl-phosphate reductase from Moritella profunda.